Consider the following 244-residue polypeptide: Purine nucleoside phosphorylase HI_0175 (244 aa).

Zn(2+) contacts are provided by histidine 70, cysteine 105, and histidine 122.

It belongs to the purine nucleoside phosphorylase YfiH/LACC1 family. Homodimer. Cu(2+) serves as cofactor. Requires Zn(2+) as cofactor.

It catalyses the reaction adenosine + phosphate = alpha-D-ribose 1-phosphate + adenine. It carries out the reaction S-methyl-5'-thioadenosine + phosphate = 5-(methylsulfanyl)-alpha-D-ribose 1-phosphate + adenine. The enzyme catalyses inosine + phosphate = alpha-D-ribose 1-phosphate + hypoxanthine. The catalysed reaction is adenosine + H2O + H(+) = inosine + NH4(+). Its function is as follows. Purine nucleoside enzyme that catalyzes the phosphorolysis of adenosine and inosine nucleosides, yielding D-ribose 1-phosphate and the respective free bases, adenine and hypoxanthine. Also catalyzes the phosphorolysis of S-methyl-5'-thioadenosine into adenine and S-methyl-5-thio-alpha-D-ribose 1-phosphate. Also has adenosine deaminase activity. In Haemophilus influenzae (strain ATCC 51907 / DSM 11121 / KW20 / Rd), this protein is Purine nucleoside phosphorylase HI_0175.